We begin with the raw amino-acid sequence, 173 residues long: Alpha-crystallin A chain (173 aa).

M1 bears the N-acetylmethionine mark. The interval 1-63 (MDVTIQHPWF…RTVLDSGVSE (63 aa)) is required for complex formation with BFSP1 and BFSP2. At Q6 the chain carries Deamidated glutamine; partial. S45 is subject to Phosphoserine. Q50 bears the Deamidated glutamine; partial mark. The region spanning 52 to 162 (LFRTVLDSGV…GHSERAIPVS (111 aa)) is the sHSP domain. Position 70 is an N6-acetyllysine (K70). Q90 carries the post-translational modification Deamidated glutamine; partial. Position 99 is an N6-acetyllysine (K99). H100 contributes to the Zn(2+) binding site. Position 101 is a deamidated asparagine; partial (N101). Residues E102 and H107 each coordinate Zn(2+). S122 is modified (phosphoserine). N123 carries the post-translational modification Deamidated asparagine; partial. The segment at 145-173 (KVQSGLDAGHSERAIPVSREEKPSSAPSS) is disordered. Q147 carries the deamidated glutamine; partial modification. The span at 153-167 (GHSERAIPVSREEKP) shows a compositional bias: basic and acidic residues. H154 is a Zn(2+) binding site. S162 carries an O-linked (GlcNAc) serine glycan.

It belongs to the small heat shock protein (HSP20) family. In terms of assembly, heteromer composed of three CRYAA and one CRYAB subunits. Inter-subunit bridging via zinc ions enhances stability, which is crucial as there is no protein turn over in the lens. Can also form homodimers and homotetramers (dimers of dimers) which serve as the building blocks of homooligomers. Within homooligomers, the zinc-binding motif is created from residues of 3 different molecules. His-100 and Glu-102 from one molecule are ligands of the zinc ion, and His-107 and His-154 residues from additional molecules complete the site with tetrahedral coordination geometry. Part of a complex required for lens intermediate filament formation composed of BFSP1, BFSP2 and CRYAA. Acetylation at Lys-70 may increase chaperone activity. Post-translationally, undergoes age-dependent proteolytical cleavage at the C-terminus.

The protein localises to the cytoplasm. It localises to the nucleus. Functionally, contributes to the transparency and refractive index of the lens. Acts as a chaperone, preventing aggregation of various proteins under a wide range of stress conditions. Required for the correct formation of lens intermediate filaments as part of a complex composed of BFSP1, BFSP2 and CRYAA. The polypeptide is Alpha-crystallin A chain (CRYAA) (Eulemur fulvus fulvus (Brown lemur)).